A 193-amino-acid chain; its full sequence is Large ribosomal subunit protein bL25 (193 aa).

Belongs to the bacterial ribosomal protein bL25 family. CTC subfamily. As to quaternary structure, part of the 50S ribosomal subunit; part of the 5S rRNA/L5/L18/L25 subcomplex. Contacts the 5S rRNA. Binds to the 5S rRNA independently of L5 and L18.

Its function is as follows. This is one of the proteins that binds to the 5S RNA in the ribosome where it forms part of the central protuberance. In Hydrogenovibrio crunogenus (strain DSM 25203 / XCL-2) (Thiomicrospira crunogena), this protein is Large ribosomal subunit protein bL25.